Consider the following 501-residue polypeptide: Arabinose import ATP-binding protein AraG (501 aa).

ABC transporter domains lie at 4–239 and 252–495; these read LEFN…MVGR and LGDN…LPDK. 36-43 contributes to the ATP binding site; it reads GENGAGKS.

It belongs to the ABC transporter superfamily. Arabinose importer (TC 3.A.1.2.2) family. As to quaternary structure, the complex is composed of two ATP-binding proteins (AraG), two transmembrane proteins (AraH) and a solute-binding protein (AraF).

It is found in the cell inner membrane. It carries out the reaction L-arabinose(out) + ATP + H2O = L-arabinose(in) + ADP + phosphate + H(+). Its function is as follows. Part of the ABC transporter complex AraFGH involved in arabinose import. Responsible for energy coupling to the transport system. The chain is Arabinose import ATP-binding protein AraG from Rhizobium etli (strain ATCC 51251 / DSM 11541 / JCM 21823 / NBRC 15573 / CFN 42).